The chain runs to 545 residues: Heparanase (545 aa).

The signal sequence occupies residues 1-37 (MLACRKPGLRPPLLLLLPLLGPLGPCSPGTPAAAAPA). A heparan sulfate group-binding site is contributed by 64-66 (DAN). The propeptide at 112–159 (PAFEERSYWLSQSNQDICKSGSIPSDVEEKLRLEWPFQEQVLLREQYQ) is linker peptide. A disulfide bridge connects residues Cys-129 and Cys-181. 160–164 (KKFTN) is a binding site for heparan sulfate group. Asn-164 and Asn-219 each carry an N-linked (GlcNAc...) asparagine glycan. Catalysis depends on Glu-227, which acts as the Proton donor. Residues 272–282 (QPRRNTVKMLK), His-298, and Arg-305 contribute to the heparan sulfate group site. Positions 290–419 (EVIDSVTWHH…LLFKKLVGNK (130 aa)) are required for heterodimerization with the heparanase 8 kDa subunit. The Nucleophile role is filled by Glu-345. Heparan sulfate group-binding positions include 350–352 (FGG) and 391–393 (GNY). A disulfide bond links Cys-439 and Cys-544. A glycan (N-linked (GlcNAc...) asparagine) is linked at Asn-461. The required for transferring proheparanase to the Golgi apparatus, secretion and subsequent enzyme activity and for enhancement of PKB/AKT1 phosphorylation stretch occupies residues 529–545 (FSYGFFVIRNAKVAACI).

This sequence belongs to the glycosyl hydrolase 79 family. As to quaternary structure, heterodimer; heterodimer formation between the 8 kDa and the 50 kDa subunits is required for enzyme activity. Interacts with TF; the interaction, inhibited by heparin, enhances the generation of activated factor X and activates coagulation. Interacts with HRG; the interaction is enhanced at acidic pH, partially inhibits binding of HPSE to cell surface receptors and modulates its enzymatic activity. Interacts with SDC1; the interaction enhances the shedding of SDC1. Interacts with HPSE2. Proteolytically processed. The cleavage of the 65 kDa form leads to the generation of a linker peptide, and the 8 kDa and the 50 kDa products. The active form, the 8/50 kDa heterodimer, is resistant to degradation. Complete removal of the linker peptide appears to be a prerequisite to the complete activation of the enzyme. In terms of processing, N-glycosylated. Glycosylation of the 50 kDa subunit appears to be essential for its solubility. Highly expressed in placenta and weakly in the kidney, lung, spleen and uterus.

The protein localises to the lysosome membrane. The protein resides in the secreted. It localises to the nucleus. The enzyme catalyses endohydrolysis of (1-&gt;4)-beta-D-glycosidic bonds of heparan sulfate chains in heparan sulfate proteoglycan.. Its activity is regulated as follows. Inhibited by laminarin sulfate and, to a lower extent, by heparin, sulfamin and EDTA. Activated by calcium and magnesium. In terms of biological role, endoglycosidase that cleaves heparan sulfate proteoglycans (HSPGs) into heparan sulfate side chains and core proteoglycans. Participates in extracellular matrix (ECM) degradation and remodeling. Selectively cleaves the linkage between a glucuronic acid unit and an N-sulfo glucosamine unit carrying either a 3-O-sulfo or a 6-O-sulfo group. Can also cleave the linkage between a glucuronic acid unit and an N-sulfo glucosamine unit carrying a 2-O-sulfo group, but not linkages between a glucuronic acid unit and a 2-O-sulfated iduronic acid moiety. Essentially inactive at neutral pH but becomes active under acidic conditions such as during tumor invasion and in inflammatory processes. Facilitates cell migration associated with metastasis, wound healing and inflammation. Enhances shedding of syndecans. Acts as a procoagulant by enhancing the generation of activated factor X/F10 in the presence of tissue factor/TF and activated factor VII/F7. Independent of its enzymatic activity, increases cell adhesion to the extracellular matrix (ECM). Enhances AKT1/PKB phosphorylation, possibly via interaction with a lipid raft-resident receptor. Plays a role in the regulation of osteogenesis. Enhances angiogenesis through up-regulation of SRC-mediated activation of VEGF. Implicated in hair follicle inner root sheath differentiation and hair homeostasis. This Bos taurus (Bovine) protein is Heparanase (HPSE).